A 367-amino-acid chain; its full sequence is Zorya protein ZorE (367 aa).

Component of antiviral defense system Zorya type II, composed of ZorA, ZorB and ZorE. Expression of Zorya type II in E.coli (strain MG1655) confers resistance to phages SECphi7 and T7. While most T7 infected Zorya-containing cells undergo abortive infection, a minority produce viable phage progeny. These eventually accumulate to a high multiplicity of infection, leading to culture collapse by 170 minutes after initial infection. ZorA and ZorB probably assemble in the cell inner membrane and exert their effect there. This may be a nuclease. This is Zorya protein ZorE from Escherichia coli (strain ATCC 8739 / DSM 1576 / NBRC 3972 / NCIMB 8545 / WDCM 00012 / Crooks).